The primary structure comprises 356 residues: Probable butyrate kinase (356 aa).

The protein belongs to the acetokinase family.

It is found in the cytoplasm. It carries out the reaction butanoate + ATP = butanoyl phosphate + ADP. The chain is Probable butyrate kinase from Clostridium perfringens (strain SM101 / Type A).